A 350-amino-acid polypeptide reads, in one-letter code: Cyclin-O (350 aa).

A disordered region spans residues 1 to 89 (MVTPCPTSPS…GSPLPGPAQP (89 aa)). A compositionally biased stretch (basic residues) spans 28 to 42 (PVKKSRRPRLRRKQP). A Phosphoserine modification is found at Ser-81.

Belongs to the cyclin family. Present in respiratory cells (at protein level).

It is found in the cytoplasm. It localises to the nucleus. The protein resides in the nucleolus. Specifically required for generation of multiciliated cells, possibly by promoting a cell cycle state compatible with centriole amplification and maturation. Acts downstream of MCIDAS to promote mother centriole amplification and maturation in preparation for apical docking. This chain is Cyclin-O, found in Homo sapiens (Human).